Consider the following 1021-residue polypeptide: Ubiquitin-activating enzyme E1 1 (1021 aa).

The ATP site is built by Arg-22, Ala-442, and Asp-468. Position 470 (Asp-470) interacts with Mg(2+). Residues Arg-479, Lys-492, Val-518, and Asp-542–Asn-543 contribute to the ATP site. Asp-542 lines the Mg(2+) pocket. The active-site Glycyl thioester intermediate is Cys-598.

It belongs to the ubiquitin-activating E1 family. In terms of assembly, monomer.

It localises to the cytoplasm. Its subcellular location is the nucleus. It carries out the reaction ATP + ubiquitin + [E1 ubiquitin-activating enzyme]-L-cysteine = AMP + diphosphate + S-ubiquitinyl-[E1 ubiquitin-activating enzyme]-L-cysteine.. The protein operates within protein modification; protein ubiquitination. In terms of biological role, E1 ubiquitin-activating enzyme that catalyzes the first step in ubiquitin conjugation to mark cellular proteins for degradation through the ubiquitin-proteasome system. Activates ubiquitin by first adenylating its C-terminal glycine residue with ATP, and thereafter linking this residue to the side chain of a cysteine residue in E1, yielding a ubiquitin-E1 thioester and free AMP. The polypeptide is Ubiquitin-activating enzyme E1 1 (UBA1) (Candida albicans (strain WO-1) (Yeast)).